A 345-amino-acid chain; its full sequence is Phosphoribosylformylglycinamidine cyclo-ligase (345 aa).

This sequence belongs to the AIR synthase family.

Its subcellular location is the cytoplasm. The catalysed reaction is 2-formamido-N(1)-(5-O-phospho-beta-D-ribosyl)acetamidine + ATP = 5-amino-1-(5-phospho-beta-D-ribosyl)imidazole + ADP + phosphate + H(+). Its pathway is purine metabolism; IMP biosynthesis via de novo pathway; 5-amino-1-(5-phospho-D-ribosyl)imidazole from N(2)-formyl-N(1)-(5-phospho-D-ribosyl)glycinamide: step 2/2. The polypeptide is Phosphoribosylformylglycinamidine cyclo-ligase (Lactobacillus acidophilus (strain ATCC 700396 / NCK56 / N2 / NCFM)).